Consider the following 375-residue polypeptide: Chaperone protein DnaJ (375 aa).

The J domain maps to 5–70 (DFYEVLGVER…SKRAAYDQYG (66 aa)). The CR-type zinc finger occupies 134 to 212 (GTTVSIRVPT…CHGEGRVEEY (79 aa)). Zn(2+) is bound by residues Cys147, Cys150, Cys164, Cys167, Cys186, Cys189, Cys200, and Cys203. CXXCXGXG motif repeat units follow at residues 147–154 (CKPCDGSG), 164–171 (CPTCGGIG), 186–193 (CPRCHGQG), and 200–207 (CNSCHGEG).

The protein belongs to the DnaJ family. As to quaternary structure, homodimer. Zn(2+) is required as a cofactor.

Its subcellular location is the cytoplasm. Functionally, participates actively in the response to hyperosmotic and heat shock by preventing the aggregation of stress-denatured proteins and by disaggregating proteins, also in an autonomous, DnaK-independent fashion. Unfolded proteins bind initially to DnaJ; upon interaction with the DnaJ-bound protein, DnaK hydrolyzes its bound ATP, resulting in the formation of a stable complex. GrpE releases ADP from DnaK; ATP binding to DnaK triggers the release of the substrate protein, thus completing the reaction cycle. Several rounds of ATP-dependent interactions between DnaJ, DnaK and GrpE are required for fully efficient folding. Also involved, together with DnaK and GrpE, in the DNA replication of plasmids through activation of initiation proteins. In Pseudomonas entomophila (strain L48), this protein is Chaperone protein DnaJ.